The sequence spans 329 residues: Isopenicillin N synthase (329 aa).

Isopenicillin N-binding residues include arginine 87, tyrosine 91, and tyrosine 189. N-[(5S)-5-amino-5-carboxypentanoyl]-L-cysteinyl-D-valine-binding residues include arginine 87, tyrosine 91, tyrosine 189, histidine 212, and aspartate 214. The Fe2OG dioxygenase domain maps to threonine 180–alanine 286. Histidine 212, aspartate 214, and histidine 268 together coordinate Fe(2+). Position 277 (arginine 277) interacts with 2-oxoglutarate. Position 279 (serine 279) interacts with isopenicillin N. Serine 279 serves as a coordination point for N-[(5S)-5-amino-5-carboxypentanoyl]-L-cysteinyl-D-valine.

It belongs to the iron/ascorbate-dependent oxidoreductase family. Fe cation serves as cofactor. It depends on L-ascorbate as a cofactor.

The enzyme catalyses N-[(5S)-5-amino-5-carboxypentanoyl]-L-cysteinyl-D-valine + O2 = isopenicillin N + 2 H2O. It participates in antibiotic biosynthesis; penicillin G biosynthesis; penicillin G from L-alpha-aminoadipate and L-cysteine and L-valine: step 2/3. In terms of biological role, removes, in the presence of oxygen, 4 hydrogen atoms from delta-L-(alpha-aminoadipyl)-L-cysteinyl-D-valine (ACV) to form the azetidinone and thiazolidine rings of isopenicillin. This chain is Isopenicillin N synthase (pcbC), found in Streptomyces griseus.